We begin with the raw amino-acid sequence, 962 residues long: Nonribosomal peptide synthetase atqA (962 aa).

The interval 34–462 (AANTTEGIIA…DGRTKEMVNI (429 aa)) is adenylation (A) domain. The 78-residue stretch at 595 to 672 (SAEEATILSI…GLCQRIAATS (78 aa)) folds into the Carrier domain. Ser630 is subject to O-(pantetheine 4'-phosphoryl)serine. Positions 694-951 (PLWLVHPGVG…KPEYVANFAK (258 aa)) are thioesterase (TE) domain.

It belongs to the NRP synthetase family.

The protein operates within secondary metabolite biosynthesis. In terms of biological role, nonribosomal peptide synthetase; part of the gene cluster that mediates the biosynthesis of asterriquinone CT5, a natural product that displays potential biological activities including antitumor and insulin mimic activities. The nonribosomal peptide synthetase atqA is responsible for the production of the benzoquinone derivative didemethylasterriquinone D (DDAQ D), via condensation of 2 indole pyruvic acid (IPA) molecules. The symmetric connectivity of the 2 IPA molecules is thought to arise by head-to-tail dual Claisen condensations catalyzed by the TE domain of atqA. DDAQ D represents the core structure of asterriquinones and is further modified by yet unidentified tailoring enzymes to lead to the production of asterriquinone CT5. This is Nonribosomal peptide synthetase atqA from Aspergillus terreus (strain NIH 2624 / FGSC A1156).